Consider the following 833-residue polypeptide: Zinc phosphodiesterase ELAC protein 2 homolog (833 aa).

The N-terminal 19 residues, 1–19 (MLGAIARKTVENRILVSRH), are a transit peptide targeting the mitochondrion. Positions 624 to 646 (LTPPGSPGGPPGKRPRLPSPHLP) are enriched in pro residues. Positions 624–652 (LTPPGSPGGPPGKRPRLPSPHLPPSRDVL) are disordered.

This sequence belongs to the RNase Z family. As to quaternary structure, homodimer. Zn(2+) is required as a cofactor. In terms of tissue distribution, highly expressed in the germline.

Its subcellular location is the mitochondrion. The protein localises to the nucleus. The enzyme catalyses Endonucleolytic cleavage of RNA, removing extra 3' nucleotides from tRNA precursor, generating 3' termini of tRNAs. A 3'-hydroxy group is left at the tRNA terminus and a 5'-phosphoryl group is left at the trailer molecule.. Its function is as follows. Zinc phosphodiesterase, which displays some tRNA 3'-processing endonuclease activity. Probably involved in tRNA maturation, by removing a 3'-trailer from precursor tRNA. Involved in germline proliferation. May be required for both mitosis and meiosis in germ cells. In terms of biological role, does not regulate the mitochondrial unfolded protein response following mitochondrial stress. Functionally, plays a role in mitochondrial unfolded protein response. Upon mitochondrial stress is exported from the nucleus where its tRNA endonuclease activity is negatively regulated. In response to mitochondrial stress, might be involved in activating a transcriptional response in an ATFS-1- and DVE-1-dependent manner. May play a role in negatively regulating the mitochondrial membrane potential. This is Zinc phosphodiesterase ELAC protein 2 homolog from Caenorhabditis elegans.